Here is a 340-residue protein sequence, read N- to C-terminus: Tryptophan--tRNA ligase (340 aa).

Residues 11–13 and 19–20 contribute to the ATP site; these read RPT and GH. Positions 12-20 match the 'HIGH' region motif; the sequence is PTGKLHLGH. L-tryptophan is bound at residue Asp-140. ATP is bound by residues 152–154, Leu-194, and 202–206; these read GND and KMSKS. Positions 202-206 match the 'KMSKS' region motif; sequence KMSKS.

Belongs to the class-I aminoacyl-tRNA synthetase family. In terms of assembly, homodimer.

Its subcellular location is the cytoplasm. The catalysed reaction is tRNA(Trp) + L-tryptophan + ATP = L-tryptophyl-tRNA(Trp) + AMP + diphosphate + H(+). In terms of biological role, catalyzes the attachment of tryptophan to tRNA(Trp). The chain is Tryptophan--tRNA ligase from Streptococcus mutans serotype c (strain ATCC 700610 / UA159).